The sequence spans 407 residues: Phosphopentomutase (407 aa).

Asp-10, Asp-306, His-311, Asp-347, His-348, and His-359 together coordinate Mn(2+).

Belongs to the phosphopentomutase family. Requires Mn(2+) as cofactor.

Its subcellular location is the cytoplasm. The catalysed reaction is 2-deoxy-alpha-D-ribose 1-phosphate = 2-deoxy-D-ribose 5-phosphate. It carries out the reaction alpha-D-ribose 1-phosphate = D-ribose 5-phosphate. It functions in the pathway carbohydrate degradation; 2-deoxy-D-ribose 1-phosphate degradation; D-glyceraldehyde 3-phosphate and acetaldehyde from 2-deoxy-alpha-D-ribose 1-phosphate: step 1/2. In terms of biological role, isomerase that catalyzes the conversion of deoxy-ribose 1-phosphate (dRib-1-P) and ribose 1-phosphate (Rib-1-P) to deoxy-ribose 5-phosphate (dRib-5-P) and ribose 5-phosphate (Rib-5-P), respectively. The sequence is that of Phosphopentomutase from Yersinia pestis bv. Antiqua (strain Antiqua).